The sequence spans 297 residues: uncharacterized protein (297 aa).

The next 4 membrane-spanning stretches (helical) occupy residues Asp-3–Leu-23, Val-38–Leu-58, Ile-103–Leu-123, and Tyr-128–Met-148.

Its subcellular location is the cell membrane. This is an uncharacterized protein from Bacillus subtilis (strain 168).